Consider the following 190-residue polypeptide: MNNNLQGDAIAAAIDVLNEERVIAYPTEAVFGVGCDPDSETAVMRLLELKQRPVDKGLILIAANYEQLKPYIDDTMLTDVQRETIFSRWPGPVTFVFPAPATTPRWLTGRFDSLAVRVTDHPLVVALCQAYGKPLVSTSANLSGLPPCRTVDEVRAQFGAAFPVVPGETGGRLNPSEIRDALTGELFRQG.

One can recognise a YrdC-like domain in the interval 7–190 (GDAIAAAIDV…ALTGELFRQG (184 aa)).

It belongs to the SUA5 family. TsaC subfamily.

The protein resides in the cytoplasm. It catalyses the reaction L-threonine + hydrogencarbonate + ATP = L-threonylcarbamoyladenylate + diphosphate + H2O. Functionally, required for the formation of a threonylcarbamoyl group on adenosine at position 37 (t(6)A37) in tRNAs that read codons beginning with adenine. Catalyzes the conversion of L-threonine, HCO(3)(-)/CO(2) and ATP to give threonylcarbamoyl-AMP (TC-AMP) as the acyladenylate intermediate, with the release of diphosphate. The polypeptide is Threonylcarbamoyl-AMP synthase (Escherichia coli O157:H7).